Consider the following 133-residue polypeptide: MAVNDTLADMLTRIRNASIVKHDIVPVPSTRMTRSVAEVLKMEGLILEYQDQGEGKDRQLLLTLKYAGRQRRPLITNLKRVSRPGLRVYANRKELPRVLGGIGIAIISTSQGVMTDRDARRAGVGGEVLCYVF.

The protein belongs to the universal ribosomal protein uS8 family. As to quaternary structure, part of the 30S ribosomal subunit. Contacts proteins S5 and S12.

In terms of biological role, one of the primary rRNA binding proteins, it binds directly to 16S rRNA central domain where it helps coordinate assembly of the platform of the 30S subunit. In Gloeobacter violaceus (strain ATCC 29082 / PCC 7421), this protein is Small ribosomal subunit protein uS8.